The sequence spans 282 residues: Pantothenate synthetase (282 aa).

ATP is bound at residue 30–37 (MGFLHDGH). The Proton donor role is filled by histidine 37. Residue glutamine 60 coordinates (R)-pantoate. Glutamine 60 is a binding site for beta-alanine. 146-149 (GQKD) serves as a coordination point for ATP. Glutamine 152 is a (R)-pantoate binding site. ATP contacts are provided by residues isoleucine 175 and 183 to 186 (KSSR).

This sequence belongs to the pantothenate synthetase family. As to quaternary structure, homodimer.

The protein localises to the cytoplasm. The catalysed reaction is (R)-pantoate + beta-alanine + ATP = (R)-pantothenate + AMP + diphosphate + H(+). Its pathway is cofactor biosynthesis; (R)-pantothenate biosynthesis; (R)-pantothenate from (R)-pantoate and beta-alanine: step 1/1. In terms of biological role, catalyzes the condensation of pantoate with beta-alanine in an ATP-dependent reaction via a pantoyl-adenylate intermediate. The polypeptide is Pantothenate synthetase (Campylobacter jejuni subsp. doylei (strain ATCC BAA-1458 / RM4099 / 269.97)).